We begin with the raw amino-acid sequence, 257 residues long: Zinc transporter ZupT (257 aa).

Helical transmembrane passes span 5-25, 32-52, and 61-81; these read LILTILAGAATFIGAFLGVLG, LLAFSLGFAAGIMLLISLMEM, and GMSPVLGYGMFIFGLLGYFGL. Positions 120 and 123 each coordinate Fe(2+). Residues Glu123 and His148 each contribute to the Zn(2+) site. 4 helical membrane-spanning segments follow: residues 137–157, 171–191, 195–215, and 236–256; these read LGFGIALAVALHNIPEGLAVA, ILWAGISGLAEILGGVLAWLI, MISPVVMAAIMAAVAGIMVAL, and GVLCGMSVMGFSLVLLQTVGI. The Fe(2+) site is built by Asn149, Glu152, and Glu181. Glu152 lines the Zn(2+) pocket.

The protein belongs to the ZIP transporter (TC 2.A.5) family. ZupT subfamily.

It localises to the cell inner membrane. It catalyses the reaction Zn(2+)(in) = Zn(2+)(out). Mediates zinc uptake. May also transport other divalent cations. The protein is Zinc transporter ZupT of Escherichia coli O81 (strain ED1a).